We begin with the raw amino-acid sequence, 462 residues long: MGKTLFDKLWNRHVIYGKEGEPQLLYVDLHLIHEVTSPQAFEGLRMENRPLRRPDKTFATMDHNVPTEDIFNIQDLVAKKQIEALQTNCEEFGVTLADMGSDRQGIVHMVGPETGLTQPGKVIVCGDSHTATHGAFGAIGFGIGSSEVEHVFATQTIWQQKPKSMGIEINGNLPKGVYAKDIILHLIATYGVAFGTGYAVEYYGETIRNMSMEERMTICNMAIEGGAKMGMMAPDETTFEYVRGREYAPADMDKAISDWKTLQTDPDAEYDLHIKMDASILEPYVTWGTNPEMGVPFSKAFPEIKDMNYERAYEYMGLKPGQTAEEIELGYVFIGSCTNARLSDLEEAARIVKGNKVKNNIRALVVPGSRQVRNAAESIGLDKIFIEAGFEWREPGCSMCLGMNPDQVPDGVHCASTSNRNFEGRQGKGARTHLVSPAMAAAAAINGHFIDIRKEAVISGGN.

[4Fe-4S] cluster-binding residues include C337, C397, and C400.

This sequence belongs to the aconitase/IPM isomerase family. LeuC type 1 subfamily. Heterodimer of LeuC and LeuD. [4Fe-4S] cluster is required as a cofactor.

It carries out the reaction (2R,3S)-3-isopropylmalate = (2S)-2-isopropylmalate. It functions in the pathway amino-acid biosynthesis; L-leucine biosynthesis; L-leucine from 3-methyl-2-oxobutanoate: step 2/4. Catalyzes the isomerization between 2-isopropylmalate and 3-isopropylmalate, via the formation of 2-isopropylmaleate. The chain is 3-isopropylmalate dehydratase large subunit from Listeria monocytogenes serotype 4b (strain CLIP80459).